A 277-amino-acid chain; its full sequence is Diaminopimelate epimerase (277 aa).

Residues N15 and N74 each contribute to the substrate site. Residue C83 is the Proton donor of the active site. Substrate is bound by residues G84–N85, N159, N194, and E212–R213. C221 acts as the Proton acceptor in catalysis. Position 222-223 (G222–T223) interacts with substrate.

The protein belongs to the diaminopimelate epimerase family. As to quaternary structure, homodimer.

The protein resides in the cytoplasm. It carries out the reaction (2S,6S)-2,6-diaminopimelate = meso-2,6-diaminopimelate. It functions in the pathway amino-acid biosynthesis; L-lysine biosynthesis via DAP pathway; DL-2,6-diaminopimelate from LL-2,6-diaminopimelate: step 1/1. Functionally, catalyzes the stereoinversion of LL-2,6-diaminopimelate (L,L-DAP) to meso-diaminopimelate (meso-DAP), a precursor of L-lysine and an essential component of the bacterial peptidoglycan. Involved in the succinylase branch of the diaminopimelate biosynthesis. The sequence is that of Diaminopimelate epimerase from Corynebacterium glutamicum (strain ATCC 13032 / DSM 20300 / JCM 1318 / BCRC 11384 / CCUG 27702 / LMG 3730 / NBRC 12168 / NCIMB 10025 / NRRL B-2784 / 534).